Here is a 137-residue protein sequence, read N- to C-terminus: uncharacterized protein (137 aa).

In terms of domain architecture, HTH marR-type spans 5–136; the sequence is NRHLIHQINQ…FSHLFRMFLQ (132 aa). Positions 51–74 form a DNA-binding region, H-T-H motif; the sequence is QKEIWSYLNVEAPTVTRTIKRLEE.

This is an uncharacterized protein from Bacillus subtilis (strain 168).